We begin with the raw amino-acid sequence, 169 residues long: Small proline-rich protein 3 (169 aa).

Low complexity predominate over residues methionine 1 to proline 24. The segment at methionine 1–glycine 57 is disordered. Serine 2 is subject to N-acetylserine. Repeat copies occupy residues serine 43 to asparagine 50, threonine 51 to cysteine 58, threonine 59 to cysteine 66, threonine 67 to cysteine 74, threonine 75 to cysteine 82, threonine 83 to cysteine 90, threonine 91 to cysteine 98, threonine 99 to tyrosine 106, threonine 107 to serine 114, isoleucine 115 to phenylalanine 122, isoleucine 123 to alanine 130, isoleucine 131 to tyrosine 138, threonine 139 to tyrosine 146, and threonine 147 to proline 154. Residues serine 43–proline 154 are 14 X 8 AA approximate tandem repeats. The segment at proline 150 to lysine 169 is disordered. Residues serine 155–lysine 169 are compositionally biased toward polar residues.

It localises to the cytoplasm. Functionally, cross-linked envelope protein of keratinocytes. The sequence is that of Small proline-rich protein 3 (SPRR3) from Homo sapiens (Human).